We begin with the raw amino-acid sequence, 650 residues long: MLFILIFSVMESLPTELAYHVLSFIDFNSVVTYRLCSQESNNFIKSMLVFFPINFNNLVDQSTNYFEFVEKVDLQFCRQITDEFLSSFCRVKIINLRGCDKITDSGLKHLQHVKEINLAGCYQITNDGLLGLNNITFIDVSYCPKITFKGFANFNDDSVAVVQTRPLEYPKSKPYTLVDKKKINIRYYNNHPFLGKNNHAFQKDTNQSHSKNSISYLPRIIIAPKKIIDKIETERCRLFDSIYAVKPEFRDRVFMKNYEDLLPNTHLYDKQSALNRLYKKSNRRKFIDNLLSNKMDIMIGGSIGLFCTHKRCNFEPNDMDLYLKYIDSEKIRKIESIIYQSFIFRSIVVIRTSITITWLIQSTTDEITSIQLNIMNIKSWAEVFITYHADLTCIGYEILTNKFVYLDNRWNNILQNDTNYFSNILNMESANSIYKAASKYQQRGFTCVSLNDLCTDIQGNIAKSYDHHIYDSLVSLLSDKIYNKLNIHTSDTGYQNYYQKKYTNTNLIHYIFDKYRMSENISFASSVSHLQLPKIYPDIIMLSVYKINEILDTQQNNNTGTEFHQLSIHKQKNYINKTEKFFYSARSGAQYTGINHYNKLHTVCIVCKCGCDSFMTMNDFIGCQYEYSLDRGICSRIQCREYEYLELFLV.

In terms of domain architecture, F-box spans 7–53 (FSVMESLPTELAYHVLSFIDFNSVVTYRLCSQESNNFIKSMLVFFPI).

This Acanthamoeba polyphaga mimivirus (APMV) protein is Putative F-box protein R757.